Here is a 153-residue protein sequence, read N- to C-terminus: UPF0127 protein TGAM_1372 (153 aa).

This sequence belongs to the UPF0127 family.

The protein is UPF0127 protein TGAM_1372 of Thermococcus gammatolerans (strain DSM 15229 / JCM 11827 / EJ3).